We begin with the raw amino-acid sequence, 532 residues long: Apolipoprotein N-acyltransferase (532 aa).

6 helical membrane passes run 37–57 (IFVA…GAIA), 75–95 (WWFG…ALLV), 106–126 (LAVL…AMIA), 128–148 (LLWS…ALAE), 179–199 (VIGL…PALL), and 207–227 (TGIG…AWTL). The 250-residue stretch at 245 to 494 (VQPSIAQAMK…VGVVDSYLPS (250 aa)) folds into the CN hydrolase domain. Catalysis depends on glutamate 289, which acts as the Proton acceptor. Lysine 353 is a catalytic residue. Catalysis depends on cysteine 406, which acts as the Nucleophile. The chain crosses the membrane as a helical span at residues 505 to 525 (GWIQTVLILLTLLAASVGLIL).

This sequence belongs to the CN hydrolase family. Apolipoprotein N-acyltransferase subfamily.

Its subcellular location is the cell inner membrane. It carries out the reaction N-terminal S-1,2-diacyl-sn-glyceryl-L-cysteinyl-[lipoprotein] + a glycerophospholipid = N-acyl-S-1,2-diacyl-sn-glyceryl-L-cysteinyl-[lipoprotein] + a 2-acyl-sn-glycero-3-phospholipid + H(+). The protein operates within protein modification; lipoprotein biosynthesis (N-acyl transfer). Its function is as follows. Catalyzes the phospholipid dependent N-acylation of the N-terminal cysteine of apolipoprotein, the last step in lipoprotein maturation. This is Apolipoprotein N-acyltransferase from Brucella melitensis biotype 1 (strain ATCC 23456 / CCUG 17765 / NCTC 10094 / 16M).